The sequence spans 204 residues: MVPRLDFAEAAKGVIAMARFAGARGWVPATSGNFSVRMNELSAALTATGANKAELDENGVIEAEIAGAKHPRASAEAPLHLARYRAAPGIGAISHMHSMAATVLSRRHAGTGAVRLEGWELMKAFAGVTTHDMSIDIPIVPNDQDTDRLAALVEERLDKDSICPGYLIAGHGLYVWGASAAETIRHMEAFDFLLTAQLHEESAR.

Residues His-95 and His-97 each contribute to the Zn(2+) site.

Belongs to the aldolase class II family. MtnB subfamily. It depends on Zn(2+) as a cofactor.

The catalysed reaction is 5-(methylsulfanyl)-D-ribulose 1-phosphate = 5-methylsulfanyl-2,3-dioxopentyl phosphate + H2O. It functions in the pathway amino-acid biosynthesis; L-methionine biosynthesis via salvage pathway; L-methionine from S-methyl-5-thio-alpha-D-ribose 1-phosphate: step 2/6. Catalyzes the dehydration of methylthioribulose-1-phosphate (MTRu-1-P) into 2,3-diketo-5-methylthiopentyl-1-phosphate (DK-MTP-1-P). This chain is Methylthioribulose-1-phosphate dehydratase, found in Parvibaculum lavamentivorans (strain DS-1 / DSM 13023 / NCIMB 13966).